A 616-amino-acid polypeptide reads, in one-letter code: DNA mismatch repair protein MutL (616 aa).

The protein belongs to the DNA mismatch repair MutL/HexB family.

Functionally, this protein is involved in the repair of mismatches in DNA. It is required for dam-dependent methyl-directed DNA mismatch repair. May act as a 'molecular matchmaker', a protein that promotes the formation of a stable complex between two or more DNA-binding proteins in an ATP-dependent manner without itself being part of a final effector complex. The sequence is that of DNA mismatch repair protein MutL from Syntrophus aciditrophicus (strain SB).